The following is a 436-amino-acid chain: MTTFSPREIVSELDRYIVGQHEAKRAVAIALRNRWRRQQLEPDLRDEVMPKNILMIGPTGVGKTEISRRLAKLAGAPFIKVEATKFTEVGYVGRDVEQIIRDLVEVGIGLVREKKRAEVQAKAHMSAEERVLDALVGATASPATRDSFRKKLRDGQLDDKEIDIEVADTGSGMPGGFEIPGMPGANIGVLNLSEMFGKAMGGRTKKVRTTVKDSYKELVRDESDKLIDNEAIQREAVRSAEDDGIVFLDEIDKIAARDGGMGAGVSREGVQRDLLPLVEGTTVSTKYGPVKTDHILFIASGAFHVSKPSDLLPELQGRLPIRVELRPLTKEDFRRILTEPEASLIRQYKALMETEDLKLDFTDDAIDALADVAVHLNSTVENIGARRLQTVMERVLDEISYNASDRAGVSVTIDAAYVREHVGDLANNTDLSRFIL.

ATP contacts are provided by residues Val18, Gly60–Glu65, Asp249, Glu314, and Arg386.

This sequence belongs to the ClpX chaperone family. HslU subfamily. As to quaternary structure, a double ring-shaped homohexamer of HslV is capped on each side by a ring-shaped HslU homohexamer. The assembly of the HslU/HslV complex is dependent on binding of ATP.

The protein localises to the cytoplasm. Functionally, ATPase subunit of a proteasome-like degradation complex; this subunit has chaperone activity. The binding of ATP and its subsequent hydrolysis by HslU are essential for unfolding of protein substrates subsequently hydrolyzed by HslV. HslU recognizes the N-terminal part of its protein substrates and unfolds these before they are guided to HslV for hydrolysis. The chain is ATP-dependent protease ATPase subunit HslU from Rhizobium rhizogenes (strain K84 / ATCC BAA-868) (Agrobacterium radiobacter).